The chain runs to 380 residues: Chorismate synthase (380 aa).

The NADP(+) site is built by Arg-48 and Arg-53. FMN contacts are provided by residues 126–128, Gly-284, 299–303, and Arg-326; these read RAS and KPTSS.

The protein belongs to the chorismate synthase family. FMNH2 is required as a cofactor.

The catalysed reaction is 5-O-(1-carboxyvinyl)-3-phosphoshikimate = chorismate + phosphate. It participates in metabolic intermediate biosynthesis; chorismate biosynthesis; chorismate from D-erythrose 4-phosphate and phosphoenolpyruvate: step 7/7. Functionally, catalyzes the anti-1,4-elimination of the C-3 phosphate and the C-6 proR hydrogen from 5-enolpyruvylshikimate-3-phosphate (EPSP) to yield chorismate, which is the branch point compound that serves as the starting substrate for the three terminal pathways of aromatic amino acid biosynthesis. This reaction introduces a second double bond into the aromatic ring system. This is Chorismate synthase from Ignicoccus hospitalis (strain KIN4/I / DSM 18386 / JCM 14125).